The sequence spans 476 residues: Abscisic acid 8'-hydroxylase CYP707A1 (476 aa).

The helical transmembrane segment at 5–25 threads the bilayer; it reads FEIFLYISMFVLGYLSYYFCF. Residue C422 participates in heme binding.

Belongs to the cytochrome P450 family. It depends on heme as a cofactor. As to expression, expressed in ovaries (specifically in ovules and placenta), sepals, petals and pedicels.

The protein localises to the membrane. The enzyme catalyses 2-cis-(+)-abscisate + reduced [NADPH--hemoprotein reductase] + O2 = (+)-8'-hydroxyabscisate + oxidized [NADPH--hemoprotein reductase] + H2O + H(+). It functions in the pathway plant hormone degradation; abscisic acid degradation. In terms of biological role, involved in the oxidative degradation of abscisic acid, especially in pollinated ovaries. This is Abscisic acid 8'-hydroxylase CYP707A1 from Solanum lycopersicum (Tomato).